The chain runs to 360 residues: Phosphoserine aminotransferase (360 aa).

Arg-42 is an L-glutamate binding site. Residues 76-77, Trp-102, Thr-152, Asp-172, and Gln-195 contribute to the pyridoxal 5'-phosphate site; that span reads AR. The residue at position 196 (Lys-196) is an N6-(pyridoxal phosphate)lysine. Residue 237 to 238 coordinates pyridoxal 5'-phosphate; it reads NT.

Belongs to the class-V pyridoxal-phosphate-dependent aminotransferase family. SerC subfamily. As to quaternary structure, homodimer. Requires pyridoxal 5'-phosphate as cofactor.

It is found in the cytoplasm. The enzyme catalyses O-phospho-L-serine + 2-oxoglutarate = 3-phosphooxypyruvate + L-glutamate. It carries out the reaction 4-(phosphooxy)-L-threonine + 2-oxoglutarate = (R)-3-hydroxy-2-oxo-4-phosphooxybutanoate + L-glutamate. It participates in amino-acid biosynthesis; L-serine biosynthesis; L-serine from 3-phospho-D-glycerate: step 2/3. It functions in the pathway cofactor biosynthesis; pyridoxine 5'-phosphate biosynthesis; pyridoxine 5'-phosphate from D-erythrose 4-phosphate: step 3/5. Catalyzes the reversible conversion of 3-phosphohydroxypyruvate to phosphoserine and of 3-hydroxy-2-oxo-4-phosphonooxybutanoate to phosphohydroxythreonine. This Pasteurella multocida (strain Pm70) protein is Phosphoserine aminotransferase.